Here is a 369-residue protein sequence, read N- to C-terminus: Anhydro-N-acetylmuramic acid kinase (369 aa).

Position 12 to 19 (G12 to D19) interacts with ATP.

It belongs to the anhydro-N-acetylmuramic acid kinase family.

The catalysed reaction is 1,6-anhydro-N-acetyl-beta-muramate + ATP + H2O = N-acetyl-D-muramate 6-phosphate + ADP + H(+). The protein operates within amino-sugar metabolism; 1,6-anhydro-N-acetylmuramate degradation. Its pathway is cell wall biogenesis; peptidoglycan recycling. In terms of biological role, catalyzes the specific phosphorylation of 1,6-anhydro-N-acetylmuramic acid (anhMurNAc) with the simultaneous cleavage of the 1,6-anhydro ring, generating MurNAc-6-P. Is required for the utilization of anhMurNAc either imported from the medium or derived from its own cell wall murein, and thus plays a role in cell wall recycling. The chain is Anhydro-N-acetylmuramic acid kinase from Shewanella baltica (strain OS223).